The sequence spans 318 residues: tRNA pseudouridine synthase B (318 aa).

The active-site Nucleophile is the Asp47.

This sequence belongs to the pseudouridine synthase TruB family. Type 1 subfamily.

It catalyses the reaction uridine(55) in tRNA = pseudouridine(55) in tRNA. Responsible for synthesis of pseudouridine from uracil-55 in the psi GC loop of transfer RNAs. The chain is tRNA pseudouridine synthase B from Shewanella putrefaciens (strain CN-32 / ATCC BAA-453).